The primary structure comprises 746 residues: Polyribonucleotide nucleotidyltransferase (746 aa).

Asp-490 and Asp-496 together coordinate Mg(2+). In terms of domain architecture, KH spans 557-619; sequence PRIETMIIGK…ATIDAAVKAI (63 aa). In terms of domain architecture, S1 motif spans 629 to 699; it reads GEVYEGKISS…KTGKFKLSRK (71 aa). Positions 701 to 746 are disordered; sequence LLPKPEGYEERPPRPERGERGPRQDRGDRGPRQDRGDRGPRREYRD. Residues 706–746 are compositionally biased toward basic and acidic residues; sequence EGYEERPPRPERGERGPRQDRGDRGPRQDRGDRGPRREYRD.

The protein belongs to the polyribonucleotide nucleotidyltransferase family. It depends on Mg(2+) as a cofactor.

It is found in the cytoplasm. It catalyses the reaction RNA(n+1) + phosphate = RNA(n) + a ribonucleoside 5'-diphosphate. Functionally, involved in mRNA degradation. Catalyzes the phosphorolysis of single-stranded polyribonucleotides processively in the 3'- to 5'-direction. This Parabacteroides distasonis (strain ATCC 8503 / DSM 20701 / CIP 104284 / JCM 5825 / NCTC 11152) protein is Polyribonucleotide nucleotidyltransferase.